Reading from the N-terminus, the 287-residue chain is Acetyl-coenzyme A carboxylase carboxyl transferase subunit beta (287 aa).

A CoA carboxyltransferase N-terminal domain is found at 36-287 (MWVKCDRCGK…KVLYKILELH (252 aa)). Cysteine 40, cysteine 43, cysteine 59, and cysteine 62 together coordinate Zn(2+). The C4-type zinc-finger motif lies at 40–62 (CDRCGKTLYKKDLDENLKVCKFC).

It belongs to the AccD/PCCB family. As to quaternary structure, acetyl-CoA carboxylase is a heterohexamer composed of biotin carboxyl carrier protein (AccB), biotin carboxylase (AccC) and two subunits each of ACCase subunit alpha (AccA) and ACCase subunit beta (AccD). Zn(2+) is required as a cofactor.

It is found in the cytoplasm. It catalyses the reaction N(6)-carboxybiotinyl-L-lysyl-[protein] + acetyl-CoA = N(6)-biotinyl-L-lysyl-[protein] + malonyl-CoA. It participates in lipid metabolism; malonyl-CoA biosynthesis; malonyl-CoA from acetyl-CoA: step 1/1. In terms of biological role, component of the acetyl coenzyme A carboxylase (ACC) complex. Biotin carboxylase (BC) catalyzes the carboxylation of biotin on its carrier protein (BCCP) and then the CO(2) group is transferred by the transcarboxylase to acetyl-CoA to form malonyl-CoA. The sequence is that of Acetyl-coenzyme A carboxylase carboxyl transferase subunit beta from Clostridium novyi (strain NT).